The chain runs to 129 residues: Small ribosomal subunit protein uS11 (129 aa).

It belongs to the universal ribosomal protein uS11 family. Part of the 30S ribosomal subunit. Interacts with proteins S7 and S18. Binds to IF-3.

In terms of biological role, located on the platform of the 30S subunit, it bridges several disparate RNA helices of the 16S rRNA. Forms part of the Shine-Dalgarno cleft in the 70S ribosome. The polypeptide is Small ribosomal subunit protein uS11 (Photobacterium profundum (strain SS9)).